We begin with the raw amino-acid sequence, 514 residues long: MDKFQRDGKEDTSRQWRFLYPLLFQEDLYTIAYDHYSNRSSSLEPMGNSSSNDRFSFLTVKRSISRIRQQNGSIVPFVNCDQNKLVGHNKSFYSELVLGGLTAIPGVPFSIRSKHPLEEXNEWTSFRSIHSIFPLMEDKIPHSNFILDIRIPHLTHPEILVRTFRRWIQDAPSLHSLRSVLHEHRNLIISSNLDQLILIASKENTRLSLFLWNYYAYECESLLVPLWKRFSHSRSLPYESFIERTPFYRKIEHIAIFYHKYLKKSLWFLKDPSIHYVKYRERSIIALRGTYLLVKKWRYHLTNFWQCHFHLWLQPYRIYIDELSNNGFSFLGYLLSAKMXPPVVKNKTVDDPFIPVLIXKGFDPAAPVXFLIGSLVKEKFCDISGHPFSRLAWTGLTDDDILDRFDRIWRNIFHYHSGSSKKDGLYHMKYILRLPCAKTLACKHKSAIRVVRERFGSELFTKSFPKERESIFLPFSKTRSQRERIWHSDIIQRNPSVNPWWKEHNLRIEPLFDR.

It belongs to the intron maturase 2 family. MatK subfamily.

It localises to the plastid. The protein localises to the chloroplast. Its function is as follows. Usually encoded in the trnK tRNA gene intron. Probably assists in splicing its own and other chloroplast group II introns. The protein is Maturase K of Lepidozamia peroffskyana (Peroffsky's lepidozamia).